Here is a 521-residue protein sequence, read N- to C-terminus: Serine/threonine-protein kinase A (521 aa).

In terms of domain architecture, Protein kinase spans 15-289 (YQLVELVGSG…DVIIRAIDAI (275 aa)). Residues 21-29 (VGSGAMGQV) and K45 contribute to the ATP site. D148 acts as the Proton acceptor in catalysis.

This sequence belongs to the protein kinase superfamily. Ser/Thr protein kinase family. In terms of processing, autophosphorylated.

The enzyme catalyses L-seryl-[protein] + ATP = O-phospho-L-seryl-[protein] + ADP + H(+). It carries out the reaction L-threonyl-[protein] + ATP = O-phospho-L-threonyl-[protein] + ADP + H(+). Protein kinase that regulates cellular motility via phosphorylation of membrane proteins. In Synechocystis sp. (strain ATCC 27184 / PCC 6803 / Kazusa), this protein is Serine/threonine-protein kinase A (spkA).